A 377-amino-acid polypeptide reads, in one-letter code: Transcription factor Sox-17-alpha-B (377 aa).

2 disordered regions span residues 1–20 (MSSP…KCSV) and 31–57 (QWSE…AEGR). Basic and acidic residues predominate over residues 42 to 57 (GKLKSDANSRSKAEGR). The HMG box DNA-binding region spans 58–126 (IRRPMNAFMV…QHMQDHPNYK (69 aa)). The Sox C-terminal domain maps to 262–376 (GSPVEGMMAC…TAVYYCNYPS (115 aa)). The tract at residues 282–321 (MYLPGSTRHHQHPQAGQPSPPPEAQQLGRADQTQQADMMA) is disordered. Residues 325 to 333 (TEFEQYLSY) carry the 9aaTAD motif. Residues 326 to 331 (EFEQYL) form a required for transcriptional activity and interaction with ctnnb1 region.

In terms of assembly, interacts (via C-terminus) with ctnnb1/beta-catenin (via Armadillo repeats); this interaction is required for inhibition of wnt-signaling. Enriched in the embryonic endoderm. Expressed in the embryonic gut, with strong expression in the posterior gut during tailbud stages. Expressed at a low level in the adult kidney and spleen.

The protein resides in the nucleus. Its function is as follows. Transcription activator. Binds to the DNA sequence 5'-AACAAT-3'. All of the sox17 proteins are required for embryonic endoderm development and gastrulation movements, and show some redundancy in function. In addition, the sox17 proteins have distinct but overlapping roles in later gut development. Acts downstream of vegt-signaling in endoderm differentiation to induce a range of endodermal genes both directly (including endodermin and dhh/chh) and indirectly. Also represses wnt-responsive genes to inhibit wnt/beta-catenin signaling. The chain is Transcription factor Sox-17-alpha-B (sox17a-b) from Xenopus laevis (African clawed frog).